The primary structure comprises 198 residues: Nicotinamidase 3 (198 aa).

Belongs to the isochorismatase family.

The catalysed reaction is nicotinamide + H2O = nicotinate + NH4(+). The protein operates within cofactor biosynthesis; nicotinate biosynthesis; nicotinate from nicotinamide: step 1/1. Its function is as follows. Catalyzes the deamidation of nicotinamide, an early step in the NAD(+) salvage pathway. Prevents the accumulation of intracellular nicotinamide, a known inhibitor of poly(ADP-ribose) polymerases (PARP enzymes). The protein is Nicotinamidase 3 of Arabidopsis thaliana (Mouse-ear cress).